The following is a 745-amino-acid chain: Elongation factor G, mitochondrial (745 aa).

The N-terminal 15 residues, 1–15 (MSLITRLLTASSPLR), are a transit peptide targeting the mitochondrion. In terms of domain architecture, tr-type G spans 40–317 (DKIRNIGISA…AVLEYLPNPG (278 aa)). Residues 49–56 (AHIDSGKT), 116–120 (DTPGH), and 170–173 (NKLD) contribute to the GTP site.

Belongs to the TRAFAC class translation factor GTPase superfamily. Classic translation factor GTPase family. EF-G/EF-2 subfamily.

It localises to the mitochondrion. It participates in protein biosynthesis; polypeptide chain elongation. Mitochondrial GTPase that catalyzes the GTP-dependent ribosomal translocation step during translation elongation. During this step, the ribosome changes from the pre-translocational (PRE) to the post-translocational (POST) state as the newly formed A-site-bound peptidyl-tRNA and P-site-bound deacylated tRNA move to the P and E sites, respectively. Catalyzes the coordinated movement of the two tRNA molecules, the mRNA and conformational changes in the ribosome. Essential during development as it acts as a retrograde signal from mitochondria to the nucleus to slow down cell proliferation if mitochondrial energy output is low. This chain is Elongation factor G, mitochondrial (ico), found in Drosophila ananassae (Fruit fly).